The following is a 119-amino-acid chain: Small ribosomal subunit protein bS16 (119 aa).

Residues 89–103 are compositionally biased toward basic and acidic residues; it reads TTKSTKEKAATDKKA. Positions 89–119 are disordered; the sequence is TTKSTKEKAATDKKAKVTKKPKTKTTTDVKK.

This sequence belongs to the bacterial ribosomal protein bS16 family.

This chain is Small ribosomal subunit protein bS16, found in Spiroplasma kunkelii.